The primary structure comprises 187 residues: ATP synthase subunit delta (187 aa).

The protein belongs to the ATPase delta chain family. F-type ATPases have 2 components, F(1) - the catalytic core - and F(0) - the membrane proton channel. F(1) has five subunits: alpha(3), beta(3), gamma(1), delta(1), epsilon(1). F(0) has three main subunits: a(1), b(2) and c(10-14). The alpha and beta chains form an alternating ring which encloses part of the gamma chain. F(1) is attached to F(0) by a central stalk formed by the gamma and epsilon chains, while a peripheral stalk is formed by the delta and b chains.

It localises to the cell membrane. F(1)F(0) ATP synthase produces ATP from ADP in the presence of a proton or sodium gradient. F-type ATPases consist of two structural domains, F(1) containing the extramembraneous catalytic core and F(0) containing the membrane proton channel, linked together by a central stalk and a peripheral stalk. During catalysis, ATP synthesis in the catalytic domain of F(1) is coupled via a rotary mechanism of the central stalk subunits to proton translocation. Functionally, this protein is part of the stalk that links CF(0) to CF(1). It either transmits conformational changes from CF(0) to CF(1) or is implicated in proton conduction. The sequence is that of ATP synthase subunit delta from Mesomycoplasma hyopneumoniae (strain 232) (Mycoplasma hyopneumoniae).